Here is a 227-residue protein sequence, read N- to C-terminus: UPF0173 metal-dependent hydrolase Saci_1512 (227 aa).

The protein belongs to the UPF0173 family.

The protein is UPF0173 metal-dependent hydrolase Saci_1512 of Sulfolobus acidocaldarius (strain ATCC 33909 / DSM 639 / JCM 8929 / NBRC 15157 / NCIMB 11770).